We begin with the raw amino-acid sequence, 170 residues long: Ribosome maturation factor RimM (170 aa).

The PRC barrel domain occupies 97-170 (KNEFYWTDLI…QIRVEWGSDW (74 aa)).

The protein belongs to the RimM family. Binds ribosomal protein uS19.

Its subcellular location is the cytoplasm. In terms of biological role, an accessory protein needed during the final step in the assembly of 30S ribosomal subunit, possibly for assembly of the head region. Essential for efficient processing of 16S rRNA. May be needed both before and after RbfA during the maturation of 16S rRNA. It has affinity for free ribosomal 30S subunits but not for 70S ribosomes. This chain is Ribosome maturation factor RimM, found in Dechloromonas aromatica (strain RCB).